We begin with the raw amino-acid sequence, 186 residues long: dCTP deaminase (186 aa).

Residue 107–112 (KSTYAR) participates in dCTP binding. The active-site Proton donor/acceptor is the E133. Residues Q152, Y166, and Q176 each coordinate dCTP.

Belongs to the dCTP deaminase family. In terms of assembly, homotrimer.

It carries out the reaction dCTP + H2O + H(+) = dUTP + NH4(+). The protein operates within pyrimidine metabolism; dUMP biosynthesis; dUMP from dCTP (dUTP route): step 1/2. In terms of biological role, catalyzes the deamination of dCTP to dUTP. In Campylobacter fetus subsp. fetus (strain 82-40), this protein is dCTP deaminase.